A 129-amino-acid chain; its full sequence is MAWISLILSLLALSSGAISQAVVTQESALTTSPGETVTLTCRSSTGAVTTSNYANWVQEKPDHLFTGLIGGTNNRAPGVPARFSGSLIGDKAALTITGTQTEDEAMYFCALWYSNHWVFGGGTKLTVLG.

The N-terminal stretch at 1–19 (MAWISLILSLLALSSGAIS) is a signal peptide. At Gln-20 the chain carries Pyrrolidone carboxylic acid. In terms of domain architecture, Ig-like spans 20–125 (QAVVTQESAL…HWVFGGGTKL (106 aa)).

In Mus musculus (Mouse), this protein is Ig lambda-1 chain V region S43.